Here is a 231-residue protein sequence, read N- to C-terminus: Ribose-5-phosphate isomerase A (231 aa).

Substrate-binding positions include 32–35, 85–88, and 98–101; these read TGST, DGAD, and KGGG. E107 (proton acceptor) is an active-site residue. K125 is a substrate binding site.

It belongs to the ribose 5-phosphate isomerase family. Homodimer.

The enzyme catalyses aldehydo-D-ribose 5-phosphate = D-ribulose 5-phosphate. It functions in the pathway carbohydrate degradation; pentose phosphate pathway; D-ribose 5-phosphate from D-ribulose 5-phosphate (non-oxidative stage): step 1/1. Its function is as follows. Catalyzes the reversible conversion of ribose-5-phosphate to ribulose 5-phosphate. The sequence is that of Ribose-5-phosphate isomerase A from Paraburkholderia xenovorans (strain LB400).